A 339-amino-acid polypeptide reads, in one-letter code: uncharacterized protein (339 aa).

The disordered stretch occupies residues 1 to 24 (IQPARRHTKNTNMAKHTTKGTGHS). Residues 10–21 (NTNMAKHTTKGT) show a composition bias toward polar residues.

The protein resides in the mitochondrion. This is an uncharacterized protein from Zea mays (Maize).